The sequence spans 119 residues: Holo-[acyl-carrier-protein] synthase (119 aa).

Residues D8 and E60 each contribute to the Mg(2+) site.

It belongs to the P-Pant transferase superfamily. AcpS family. Mg(2+) is required as a cofactor.

It localises to the cytoplasm. The enzyme catalyses apo-[ACP] + CoA = holo-[ACP] + adenosine 3',5'-bisphosphate + H(+). In terms of biological role, transfers the 4'-phosphopantetheine moiety from coenzyme A to a Ser of acyl-carrier-protein. This is Holo-[acyl-carrier-protein] synthase from Staphylococcus haemolyticus (strain JCSC1435).